The following is a 112-amino-acid chain: Nucleoid-associated protein RER_03900 (112 aa).

This sequence belongs to the YbaB/EbfC family. In terms of assembly, homodimer.

The protein resides in the cytoplasm. It localises to the nucleoid. Its function is as follows. Binds to DNA and alters its conformation. May be involved in regulation of gene expression, nucleoid organization and DNA protection. This Rhodococcus erythropolis (strain PR4 / NBRC 100887) protein is Nucleoid-associated protein RER_03900.